Reading from the N-terminus, the 291-residue chain is Bifunctional protein FolD (291 aa).

NADP(+) contacts are provided by residues 168-170 (GRG), threonine 195, and valine 236.

This sequence belongs to the tetrahydrofolate dehydrogenase/cyclohydrolase family. As to quaternary structure, homodimer.

It carries out the reaction (6R)-5,10-methylene-5,6,7,8-tetrahydrofolate + NADP(+) = (6R)-5,10-methenyltetrahydrofolate + NADPH. It catalyses the reaction (6R)-5,10-methenyltetrahydrofolate + H2O = (6R)-10-formyltetrahydrofolate + H(+). It functions in the pathway one-carbon metabolism; tetrahydrofolate interconversion. Functionally, catalyzes the oxidation of 5,10-methylenetetrahydrofolate to 5,10-methenyltetrahydrofolate and then the hydrolysis of 5,10-methenyltetrahydrofolate to 10-formyltetrahydrofolate. This is Bifunctional protein FolD from Bifidobacterium adolescentis (strain ATCC 15703 / DSM 20083 / NCTC 11814 / E194a).